The following is an 856-amino-acid chain: MRVKGIRRNYQHWWGWGTMLLGLLMICSATEKLWVTVYYGVPVWKEATTTLFCASDAKAYDTEVHNVWATQACVPTDPNPQEVELVNVTENFNMWKNNMVEQMHEDIISLWDQSLKPCVKLTPLCVTLNCTDLRNTTNTNNSTANNNSNSEGTIKGGEMKNCSFNITTSIRDKMQKEYALLYKLDIVSIDNDSTSYRLISCNTSVITQACPKISFEPIPIHYCAPAGFAILKCNDKKFSGKGSCKNVSTVQCTHGIRPVVSTQLLLNGSLAEEEVVIRSENFTDNAKTIIVHLNESVQINCTRPNYNKRKRIHIGPGRAFYTTKNIIGTIRQAHCNISRAKWNDTLRQIVSKLKEQFKNKTIVFNQSSGGDPEIVMHSFNCGGEFFYCNTSPLFNSTWNGNNTWNNTTGSNNNITLQCKIKQIINMWQEVGKAMYAPPIEGQIRCSSNITGLLLTRDGGKDTDTNDTEIFRPGGGDMRDNWRSELYKYKVVTIEPLGVAPTKAKRRVVQREKRAAIGALFLGFLGAAGSTMGAASVTLTVQARLLLSGIVQQQNNLLRAIEAQQHMLQLTVWGIKQLQARVLAVERYLKDQQLLGFWGCSGKLICTTTVPWNASWSNKSLDDIWNNMTWMQWEREIDNYTSLIYSLLEKSQTQQEKNEQELLELDKWASLWNWFDITNWLWYIKIFIMIVGGLVGLRIVFAVLSIVNRVRQGYSPLSLQTRPPVPRGPDRPEGIEEEGGERDRDTSGRLVHGFLAIIWVDLRSLFLFSYHHRDLLLIAARIVELLGRRGWEVLKYWWNLLQYWSQELKSSAVSLLNATAIAVAEGTDRVIEVLQRAGRAILHIPTRIRQGLERALL.

Residues 1–31 (MRVKGIRRNYQHWWGWGTMLLGLLMICSATE) form the signal peptide. Residues 32–685 (KLWVTVYYGV…ITNWLWYIKI (654 aa)) are Extracellular-facing. A disulfide bridge connects residues Cys53 and Cys73. 10 N-linked (GlcNAc...) asparagine; by host glycosylation sites follow: Asn87, Asn129, Asn135, Asn140, Asn141, Asn146, Asn161, Asn165, Asn191, and Asn202. Intrachain disulfides connect Cys118–Cys210, Cys125–Cys201, Cys130–Cys162, Cys223–Cys252, and Cys233–Cys244. A V1 region spans residues 130 to 161 (CTDLRNTTNTNNSTANNNSNSEGTIKGGEMKN). Residues 162–201 (CSFNITTSIRDKMQKEYALLYKLDIVSIDNDSTSYRLISC) form a V2 region. Residues Asn246, Asn267, Asn281, Asn294, and Asn300 are each glycosylated (N-linked (GlcNAc...) asparagine; by host). A V3 region spans residues 301–334 (CTRPNYNKRKRIHIGPGRAFYTTKNIIGTIRQAH). A disulfide bond links Cys301 and Cys335. N-linked (GlcNAc...) asparagine; by host glycosylation is found at Asn336, Asn343, Asn359, and Asn365. Positions 367 to 377 (SSGGDPEIVMH) are CD4-binding loop. 2 disulfide bridges follow: Cys381-Cys445 and Cys388-Cys418. The V4 stretch occupies residues 388–418 (CNTSPLFNSTWNGNNTWNNTTGSNNNITLQC). Asn395, Asn401, Asn405, Asn406, and Asn413 each carry an N-linked (GlcNAc...) asparagine; by host glycan. The interval 421-433 (KQIINMWQEVGKA) is essential for CD4-binding; epitope recognized by the antibody YZ23. N-linked (GlcNAc...) asparagine; by host glycosylation is found at Asn448 and Asn465. 2 V5 regions span residues 461–473 (DTDTNDTEIFRPG) and 463–473 (DTNDTEIFRPG). Residues 514-533 (AAIGALFLGFLGAAGSTMGA) form a fusion peptide region. The tract at residues 575 to 593 (KQLQARVLAVERYLKDQQL) is immunosuppression. Cys599 and Cys605 are disulfide-bonded. N-linked (GlcNAc...) asparagine; by host glycans are attached at residues Asn612, Asn617, Asn626, and Asn638. Positions 634–668 (REIDNYTSLIYSLLEKSQTQQEKNEQELLELDKWA) form a coiled coil. The segment at 663–684 (ELDKWASLWNWFDITNWLWYIK) is MPER; binding to GalCer. A helical transmembrane segment spans residues 686 to 706 (FIMIVGGLVGLRIVFAVLSIV). Residues 707-856 (NRVRQGYSPL…IRQGLERALL (150 aa)) lie on the Cytoplasmic side of the membrane. Residues 713–716 (YSPL) carry the YXXL motif; contains endocytosis signal motif. A disordered region spans residues 717-744 (SLQTRPPVPRGPDRPEGIEEEGGERDRD). Residues 855-856 (LL) carry the Di-leucine internalization motif motif.

This sequence belongs to the HIV-1 env protein family. As to quaternary structure, the mature envelope protein (Env) consists of a homotrimer of non-covalently associated gp120-gp41 heterodimers. The resulting complex protrudes from the virus surface as a spike. There seems to be as few as 10 spikes on the average virion. Interacts with host CD4, CCR5 and CXCR4. Gp120 also interacts with the C-type lectins CD209/DC-SIGN and CLEC4M/DC-SIGNR (collectively referred to as DC-SIGN(R)). Gp120 and gp41 interact with GalCer. Gp120 interacts with host ITGA4/ITGB7 complex; on CD4+ T-cells, this interaction results in rapid activation of integrin ITGAL/LFA-1, which facilitates efficient cell-to-cell spreading of HIV-1. Gp120 interacts with cell-associated heparan sulfate; this interaction increases virus infectivity on permissive cells and may be involved in infection of CD4- cells. In terms of assembly, the mature envelope protein (Env) consists of a homotrimer of non-covalently associated gp120-gp41 heterodimers. The resulting complex protrudes from the virus surface as a spike. There seems to be as few as 10 spikes on the average virion. Highly glycosylated by host. The high number of glycan on the protein is reffered to as 'glycan shield' because it contributes to hide protein sequence from adaptive immune system. Post-translationally, palmitoylation of the transmembrane protein and of Env polyprotein (prior to its proteolytic cleavage) is essential for their association with host cell membrane lipid rafts. Palmitoylation is therefore required for envelope trafficking to classical lipid rafts, but not for viral replication. In terms of processing, specific enzymatic cleavages in vivo yield mature proteins. Envelope glycoproteins are synthesized as an inactive precursor that is heavily N-glycosylated and processed likely by host cell furin in the Golgi to yield the mature SU and TM proteins. The cleavage site between SU and TM requires the minimal sequence [KR]-X-[KR]-R. About 2 of the 9 disulfide bonds of gp41 are reduced by P4HB/PDI, following binding to CD4 receptor.

It is found in the virion membrane. It localises to the host cell membrane. The protein resides in the host endosome membrane. Oligomerizes in the host endoplasmic reticulum into predominantly trimers. In a second time, gp160 transits in the host Golgi, where glycosylation is completed. The precursor is then proteolytically cleaved in the trans-Golgi and thereby activated by cellular furin or furin-like proteases to produce gp120 and gp41. Its function is as follows. Attaches the virus to the host lymphoid cell by binding to the primary receptor CD4. This interaction induces a structural rearrangement creating a high affinity binding site for a chemokine coreceptor like CXCR4 and/or CCR5. Acts as a ligand for CD209/DC-SIGN and CLEC4M/DC-SIGNR, which are respectively found on dendritic cells (DCs), and on endothelial cells of liver sinusoids and lymph node sinuses. These interactions allow capture of viral particles at mucosal surfaces by these cells and subsequent transmission to permissive cells. HIV subverts the migration properties of dendritic cells to gain access to CD4+ T-cells in lymph nodes. Virus transmission to permissive T-cells occurs either in trans (without DCs infection, through viral capture and transmission), or in cis (following DCs productive infection, through the usual CD4-gp120 interaction), thereby inducing a robust infection. In trans infection, bound virions remain infectious over days and it is proposed that they are not degraded, but protected in non-lysosomal acidic organelles within the DCs close to the cell membrane thus contributing to the viral infectious potential during DCs' migration from the periphery to the lymphoid tissues. On arrival at lymphoid tissues, intact virions recycle back to DCs' cell surface allowing virus transmission to CD4+ T-cells. In terms of biological role, acts as a class I viral fusion protein. Under the current model, the protein has at least 3 conformational states: pre-fusion native state, pre-hairpin intermediate state, and post-fusion hairpin state. During fusion of viral and target intracellular membranes, the coiled coil regions (heptad repeats) assume a trimer-of-hairpins structure, positioning the fusion peptide in close proximity to the C-terminal region of the ectodomain. The formation of this structure appears to drive apposition and subsequent fusion of viral and target cell membranes. Complete fusion occurs in host cell endosomes and is dynamin-dependent, however some lipid transfer might occur at the plasma membrane. The virus undergoes clathrin-dependent internalization long before endosomal fusion, thus minimizing the surface exposure of conserved viral epitopes during fusion and reducing the efficacy of inhibitors targeting these epitopes. Membranes fusion leads to delivery of the nucleocapsid into the cytoplasm. The protein is Envelope glycoprotein gp160 of Homo sapiens (Human).